Here is a 227-residue protein sequence, read N- to C-terminus: ATP-dependent dethiobiotin synthetase BioD (227 aa).

An ATP-binding site is contributed by 13-18 (DAGKTT). Thr17 is a Mg(2+) binding site. Lys38 is a catalytic residue. ATP-binding positions include Asp55, 118–121 (EGAG), 178–179 (NR), 207–209 (PYI), and Glu214. Residues Asp55 and Glu118 each coordinate Mg(2+).

The protein belongs to the dethiobiotin synthetase family. Homodimer. Mg(2+) is required as a cofactor.

The protein localises to the cytoplasm. The catalysed reaction is (7R,8S)-7,8-diammoniononanoate + CO2 + ATP = (4R,5S)-dethiobiotin + ADP + phosphate + 3 H(+). It participates in cofactor biosynthesis; biotin biosynthesis; biotin from 7,8-diaminononanoate: step 1/2. Functionally, catalyzes a mechanistically unusual reaction, the ATP-dependent insertion of CO2 between the N7 and N8 nitrogen atoms of 7,8-diaminopelargonic acid (DAPA, also called 7,8-diammoniononanoate) to form a ureido ring. The polypeptide is ATP-dependent dethiobiotin synthetase BioD (Tolumonas auensis (strain DSM 9187 / NBRC 110442 / TA 4)).